Reading from the N-terminus, the 242-residue chain is B-box zinc finger protein 20 (242 aa).

C5, C8, C28, H33, C58, C61, C81, and H91 together coordinate Zn(2+). Residues 5-47 (CAVCDKEEASVFCCADEAALCNGCDRHVHFANKLAGKHLRFSL) form a B box-type 1; atypical zinc finger. The B box-type 2; atypical zinc-finger motif lies at 58 to 100 (CDICGERRALLFCQEDRAILCRECDIPIHQANEHTKKHNRFLL). The disordered stretch occupies residues 112-153 (YPRASNSNSAAAFGRAKTRPKSVSSEVPSSASNEVFTSSSST). The segment covering 133 to 153 (SVSSEVPSSASNEVFTSSSST) has biased composition (low complexity).

In terms of assembly, interacts with MED25 and COP1. In terms of processing, COP1-mediated ubiquitination and subsequent proteasomal degradation of BBX20 occurs in the dark.

The protein localises to the nucleus. Its function is as follows. Acts as a positive regulator of seedling photomorphogenesis. Plays a negative role in brassinosteroid responses. The polypeptide is B-box zinc finger protein 20 (Arabidopsis thaliana (Mouse-ear cress)).